Here is a 106-residue protein sequence, read N- to C-terminus: Iron-sulfur cluster assembly protein CyaY (106 aa).

The protein belongs to the frataxin family.

Involved in iron-sulfur (Fe-S) cluster assembly. May act as a regulator of Fe-S biogenesis. In Cronobacter sakazakii (strain ATCC BAA-894) (Enterobacter sakazakii), this protein is Iron-sulfur cluster assembly protein CyaY.